The following is a 275-amino-acid chain: Formamidopyrimidine-DNA glycosylase (275 aa).

Residue P2 is the Schiff-base intermediate with DNA of the active site. Catalysis depends on E3, which acts as the Proton donor. K58 functions as the Proton donor; for beta-elimination activity in the catalytic mechanism. DNA contacts are provided by H91 and R110. Residues 238-272 (QVYGQTGKSCPRCGQAIVKLKVGGRGTHICPKCQK) form an FPG-type zinc finger. The active-site Proton donor; for delta-elimination activity is R262.

This sequence belongs to the FPG family. Monomer. It depends on Zn(2+) as a cofactor.

It carries out the reaction Hydrolysis of DNA containing ring-opened 7-methylguanine residues, releasing 2,6-diamino-4-hydroxy-5-(N-methyl)formamidopyrimidine.. The catalysed reaction is 2'-deoxyribonucleotide-(2'-deoxyribose 5'-phosphate)-2'-deoxyribonucleotide-DNA = a 3'-end 2'-deoxyribonucleotide-(2,3-dehydro-2,3-deoxyribose 5'-phosphate)-DNA + a 5'-end 5'-phospho-2'-deoxyribonucleoside-DNA + H(+). Involved in base excision repair of DNA damaged by oxidation or by mutagenic agents. Acts as a DNA glycosylase that recognizes and removes damaged bases. Has a preference for oxidized purines, such as 7,8-dihydro-8-oxoguanine (8-oxoG). Has AP (apurinic/apyrimidinic) lyase activity and introduces nicks in the DNA strand. Cleaves the DNA backbone by beta-delta elimination to generate a single-strand break at the site of the removed base with both 3'- and 5'-phosphates. The sequence is that of Formamidopyrimidine-DNA glycosylase from Streptococcus pyogenes serotype M3 (strain ATCC BAA-595 / MGAS315).